Consider the following 824-residue polypeptide: LPS-assembly protein LptD (824 aa).

Disordered regions lie at residues 1 to 26 (MTEQ…RRVR) and 67 to 117 (TQTP…PAYV). The signal sequence occupies residues 1-48 (MTEQRRSPHHPATRPPAPPGTSRRVRLPASALRPLVLAMAGLTVSAHA). Low complexity predominate over residues 98 to 115 (NTLNLSPSSTPSNPNAPA).

Belongs to the LptD family. Component of the lipopolysaccharide transport and assembly complex. Interacts with LptE and LptA.

The protein localises to the cell outer membrane. Functionally, together with LptE, is involved in the assembly of lipopolysaccharide (LPS) at the surface of the outer membrane. The polypeptide is LPS-assembly protein LptD (Cupriavidus metallidurans (strain ATCC 43123 / DSM 2839 / NBRC 102507 / CH34) (Ralstonia metallidurans)).